Here is a 404-residue protein sequence, read N- to C-terminus: Acetate kinase (404 aa).

Residue asparagine 7 coordinates Mg(2+). ATP is bound at residue lysine 14. Residue arginine 98 participates in substrate binding. Aspartate 155 acts as the Proton donor/acceptor in catalysis. Residues 214-218 (HLGNG), 289-291 (DLR), and 337-341 (GIGEN) contribute to the ATP site. Glutamate 390 is a binding site for Mg(2+).

It belongs to the acetokinase family. Homodimer. It depends on Mg(2+) as a cofactor. The cofactor is Mn(2+).

The protein resides in the cytoplasm. It carries out the reaction acetate + ATP = acetyl phosphate + ADP. It functions in the pathway metabolic intermediate biosynthesis; acetyl-CoA biosynthesis; acetyl-CoA from acetate: step 1/2. Its function is as follows. Catalyzes the formation of acetyl phosphate from acetate and ATP. Can also catalyze the reverse reaction. This is Acetate kinase from Rippkaea orientalis (strain PCC 8801 / RF-1) (Cyanothece sp. (strain PCC 8801)).